The sequence spans 474 residues: Trehalose-6-phosphate synthase (474 aa).

Arg-10 serves as a coordination point for D-glucose 6-phosphate. 22–23 (GG) is a binding site for UDP-alpha-D-glucose. D-glucose 6-phosphate contacts are provided by Tyr-77 and Asp-131. Positions 263 and 268 each coordinate UDP-alpha-D-glucose. Arg-301 contributes to the D-glucose 6-phosphate binding site. UDP-alpha-D-glucose is bound by residues Phe-340 and 366 to 370 (LVAKE).

This sequence belongs to the glycosyltransferase 20 family. As to quaternary structure, homotetramer.

The catalysed reaction is D-glucose 6-phosphate + UDP-alpha-D-glucose = alpha,alpha-trehalose 6-phosphate + UDP + H(+). It functions in the pathway glycan biosynthesis; trehalose biosynthesis. Its function is as follows. Probably involved in the osmoprotection via the biosynthesis of trehalose. Catalyzes the transfer of glucose from UDP-alpha-D-glucose (UDP-Glc) to D-glucose 6-phosphate (Glc-6-P) to form trehalose-6-phosphate. Acts with retention of the anomeric configuration of the UDP-sugar donor. In Enterobacter sp. (strain 638), this protein is Trehalose-6-phosphate synthase.